Here is a 336-residue protein sequence, read N- to C-terminus: Type II methyltransferase M2.HphI (336 aa).

The protein belongs to the N(4)/N(6)-methyltransferase family.

It catalyses the reaction a 2'-deoxyadenosine in DNA + S-adenosyl-L-methionine = an N(6)-methyl-2'-deoxyadenosine in DNA + S-adenosyl-L-homocysteine + H(+). Its function is as follows. An alpha subtype methylase that recognizes the double-stranded sequence 5'-GGTGA-3', probably methylates A-5 on the top strand, and protects the DNA from cleavage by the HphI endonuclease. The protein is Type II methyltransferase M2.HphI (hphIBM) of Haemophilus parahaemolyticus.